Reading from the N-terminus, the 76-residue chain is Transcription modulator YdgT (76 aa).

This sequence belongs to the Hha/YmoA/Cnu family.

Functionally, binds to H-NS and modifies the range of genes it silences; H-NS alone silences 'core' genes while the H-NS-Hha complex (and presumably also H-NS-YdgT) silences genes acquired by horizontal gene transfer. Plays a role silencing virulence factors in the absence of factors that induce pathogenicity. This chain is Transcription modulator YdgT (ydgT), found in Salmonella typhimurium (strain SL1344).